Reading from the N-terminus, the 95-residue chain is Aspartyl/glutamyl-tRNA(Asn/Gln) amidotransferase subunit C (95 aa).

Belongs to the GatC family. As to quaternary structure, heterotrimer of A, B and C subunits.

It carries out the reaction L-glutamyl-tRNA(Gln) + L-glutamine + ATP + H2O = L-glutaminyl-tRNA(Gln) + L-glutamate + ADP + phosphate + H(+). It catalyses the reaction L-aspartyl-tRNA(Asn) + L-glutamine + ATP + H2O = L-asparaginyl-tRNA(Asn) + L-glutamate + ADP + phosphate + 2 H(+). Its function is as follows. Allows the formation of correctly charged Asn-tRNA(Asn) or Gln-tRNA(Gln) through the transamidation of misacylated Asp-tRNA(Asn) or Glu-tRNA(Gln) in organisms which lack either or both of asparaginyl-tRNA or glutaminyl-tRNA synthetases. The reaction takes place in the presence of glutamine and ATP through an activated phospho-Asp-tRNA(Asn) or phospho-Glu-tRNA(Gln). The chain is Aspartyl/glutamyl-tRNA(Asn/Gln) amidotransferase subunit C from Dehalococcoides mccartyi (strain ATCC BAA-2100 / JCM 16839 / KCTC 5957 / BAV1).